The sequence spans 324 residues: MYSGNKVVISWIVSIGFVGMPEFMSSKTFALCRQRSFLHGPAGIRSDEEKENNFFGRVSFMDAALLLEYGWVLLVLIGLEGILAADNALVMAVMVKHLPEEKRKKALFYGLAGAFVLRFGSLFAISFLVNVWQVQAIGAIYLLYISASHLLKRYVFKKEDTHKETKQSGFWPTVLKVELADIAFAVDSILAAVALAVTLPGTSLPKIGGLDGGQFLVILAGGIIGLVIMRFAASMFVKLLKERPSLETAAFVIVGWVGVKLALYTLAHRDIAVVSEHFIHSGTWKLIFWGVLAAIAVCGWFMSGGKKQPEGAQNEQKNSTRERA.

A run of 8 helical transmembrane segments spans residues 4–24 (GNKV…PEFM), 63–83 (AALL…EGIL), 106–128 (ALFY…ISFL), 132–151 (WQVQ…SHLL), 179–199 (LADI…AVTL), 209–229 (GLDG…LVIM), 246–266 (LETA…LYTL), and 282–302 (GTWK…GWFM).

The protein belongs to the TerC family.

The protein resides in the cell membrane. This is an uncharacterized protein from Bacillus subtilis (strain 168).